The chain runs to 91 residues: Small ribosomal subunit protein bS20 (91 aa).

Positions 1–18 (MPLHKSAEKRLRQSERRN) are enriched in basic and acidic residues. A disordered region spans residues 1 to 26 (MPLHKSAEKRLRQSERRNARNRSRKK).

The protein belongs to the bacterial ribosomal protein bS20 family.

Binds directly to 16S ribosomal RNA. This Pelodictyon phaeoclathratiforme (strain DSM 5477 / BU-1) protein is Small ribosomal subunit protein bS20.